A 919-amino-acid chain; its full sequence is MLX-interacting protein (919 aa).

Positions 1 to 72 are disordered; the sequence is MAADVFMCSP…AGPGREEPPR (72 aa). The residue at position 2 (alanine 2) is an N-acetylalanine. 4 positions are modified to phosphoserine: serine 9, serine 27, serine 33, and serine 39. The span at 27–37 shows a compositional bias: acidic residues; that stretch reads SEDDDDSDTDE. Residues 44–56 show a composition bias toward low complexity; sequence SGAATPARAHASA. The interval 73-327 is required for cytoplasmic localization; that stretch reads RQQIIHSGHF…PLQPNLDFMD (255 aa). Residues 322 to 445 are transactivation domain; it reads NLDFMDTFEP…LLSPSPAPPP (124 aa). 2 disordered regions span residues 542-562 and 633-712; these read KPVSLTGGRPKQPHKIVPAPK and DLGH…SDPK. Serine 669 carries the phosphoserine modification. Positions 670–685 are enriched in polar residues; that stretch reads PQVTVTGPSRDCPNSG. The segment covering 686–706 has biased composition (low complexity); the sequence is QASPCASEQSPSPQSPQNNCS. The bHLH domain occupies 719-769; that stretch reads NRQMKHISAEQKRRFNIKMCFDMLNSLISNNSKLTSHAITLQKTVEYITKL. The segment at 769–790 is leucine-zipper; that stretch reads LQQERGQMQEEARRLREEIEEL. Positions 832–881 are mediates heterotypic interactions between MLXIP and MLX and is required for cytoplasmic localization; that stretch reads WKFWIFSIIIKPLFESFKGMVSTSSLEELHRTALSWLDQHCSLPILRPMV.

Efficient DNA binding requires dimerization with another bHLH protein. Binds DNA as a homodimer or a heterodimer with MLX. In terms of tissue distribution, widely expressed in adult tissues. Most abundant in skeletal muscle.

It is found in the cytoplasm. The protein resides in the nucleus. The protein localises to the mitochondrion outer membrane. Functionally, binds DNA as a heterodimer with MLX and activates transcription. Binds to the canonical E box sequence 5'-CACGTG-3'. Plays a role in transcriptional activation of glycolytic target genes. Involved in glucose-responsive gene regulation. The chain is MLX-interacting protein from Homo sapiens (Human).